Consider the following 302-residue polypeptide: D-alanine--D-alanine ligase (302 aa).

One can recognise an ATP-grasp domain in the interval 100 to 295 (KTVFDHHGIL…FNELIAKLIE (196 aa)). 126–180 (QDLEPPVFIKPNSGGSSLGMTFARTAEELEKGIETVFSLGDSALVEEYTKGIEVT) contributes to the ATP binding site. The Mg(2+) site is built by aspartate 250, glutamate 262, and asparagine 264.

The protein belongs to the D-alanine--D-alanine ligase family. Mg(2+) serves as cofactor. It depends on Mn(2+) as a cofactor.

The protein resides in the cytoplasm. It carries out the reaction 2 D-alanine + ATP = D-alanyl-D-alanine + ADP + phosphate + H(+). It functions in the pathway cell wall biogenesis; peptidoglycan biosynthesis. Cell wall formation. This is D-alanine--D-alanine ligase from Maridesulfovibrio salexigens (strain ATCC 14822 / DSM 2638 / NCIMB 8403 / VKM B-1763) (Desulfovibrio salexigens).